A 373-amino-acid chain; its full sequence is StAR-related lipid transfer protein 7, mitochondrial (373 aa).

The transit peptide at 1-61 directs the protein to the mitochondrion; that stretch reads MFPRRPPATL…YSESSRCALL (61 aa). Residues 89-114 adopt a coiled-coil conformation; it reads DEERIQEEELQRSINEMKRLEEMSNI. The START domain occupies 115–330; it reads FQSSGVENYP…LHMATLKAKN (216 aa). Disordered regions lie at residues 118 to 141 and 347 to 373; these read SGVE…KDKE and SSEA…IEYA.

In terms of processing, proteolytically cleaved by PARL. In terms of tissue distribution, expressed in epithelial cells of airways, peripheral bronchioles and alveoli, as well as in the basal cell layer of the epidermis (at protein level).

It is found in the mitochondrion. Functionally, may play a protective role in mucosal tissues by preventing exaggerated allergic responses. The sequence is that of StAR-related lipid transfer protein 7, mitochondrial (Stard7) from Mus musculus (Mouse).